Consider the following 131-residue polypeptide: Profilin-1 (131 aa).

Cys13 and Cys115 are oxidised to a cystine. Positions 81–97 match the Involved in PIP2 interaction motif; that stretch reads AVIRGKKGSGGITVKKT. At Thr111 the chain carries Phosphothreonine.

Belongs to the profilin family. Multimer. Occurs in many kinds of cells as a complex with monomeric actin in a 1:1 ratio. Phosphorylated by MAP kinases. As to expression, pollen specific.

It is found in the cytoplasm. Its subcellular location is the cytoskeleton. In terms of biological role, binds to actin and affects the structure of the cytoskeleton. At high concentrations, profilin prevents the polymerization of actin, whereas it enhances it at low concentrations. By binding to PIP2, it inhibits the formation of IP3 and DG. The protein is Profilin-1 (PRO1) of Zea mays (Maize).